The following is a 327-amino-acid chain: Glycerol-3-phosphate dehydrogenase [NAD(P)+] (327 aa).

NADPH is bound by residues Trp16, Arg36, and Lys108. 3 residues coordinate sn-glycerol 3-phosphate: Lys108, Gly136, and Ser138. Ala140 is a binding site for NADPH. 5 residues coordinate sn-glycerol 3-phosphate: Lys191, Asp244, Ser254, Arg255, and Asn256. Residue Lys191 is the Proton acceptor of the active site. Residue Arg255 participates in NADPH binding. Residues Leu274 and Glu276 each contribute to the NADPH site.

Belongs to the NAD-dependent glycerol-3-phosphate dehydrogenase family.

It localises to the cytoplasm. The enzyme catalyses sn-glycerol 3-phosphate + NAD(+) = dihydroxyacetone phosphate + NADH + H(+). It carries out the reaction sn-glycerol 3-phosphate + NADP(+) = dihydroxyacetone phosphate + NADPH + H(+). It functions in the pathway membrane lipid metabolism; glycerophospholipid metabolism. In terms of biological role, catalyzes the reduction of the glycolytic intermediate dihydroxyacetone phosphate (DHAP) to sn-glycerol 3-phosphate (G3P), the key precursor for phospholipid synthesis. The protein is Glycerol-3-phosphate dehydrogenase [NAD(P)+] of Bradyrhizobium sp. (strain ORS 278).